We begin with the raw amino-acid sequence, 424 residues long: Enolase (424 aa).

Gln163 provides a ligand contact to (2R)-2-phosphoglycerate. Glu205 functions as the Proton donor in the catalytic mechanism. 3 residues coordinate Mg(2+): Asp242, Glu285, and Asp312. (2R)-2-phosphoglycerate contacts are provided by Lys337, Arg366, Ser367, and Lys388. Lys337 (proton acceptor) is an active-site residue.

It belongs to the enolase family. Requires Mg(2+) as cofactor.

The protein resides in the cytoplasm. It is found in the secreted. The protein localises to the cell surface. The catalysed reaction is (2R)-2-phosphoglycerate = phosphoenolpyruvate + H2O. It functions in the pathway carbohydrate degradation; glycolysis; pyruvate from D-glyceraldehyde 3-phosphate: step 4/5. Functionally, catalyzes the reversible conversion of 2-phosphoglycerate (2-PG) into phosphoenolpyruvate (PEP). It is essential for the degradation of carbohydrates via glycolysis. In Dinoroseobacter shibae (strain DSM 16493 / NCIMB 14021 / DFL 12), this protein is Enolase.